The following is a 347-amino-acid chain: Queuosine 5'-phosphate N-glycosylase/hydrolase (347 aa).

Residues H53, F237, D239, D321, and D326 each coordinate queuine. Residue D239 is the Nucleophile or transition state stabilizer of the active site.

Belongs to the QNG1 protein family.

It carries out the reaction queuosine 5'-phosphate + H2O = queuine + D-ribose 5-phosphate. In terms of biological role, catalyzes the hydrolysis of queuosine 5'-phosphate, releasing the nucleobase queuine (q). Is required for salvage of queuine from exogenous queuosine (Q) that is imported and then converted to queuosine 5'-phosphate intracellularly. The sequence is that of Queuosine 5'-phosphate N-glycosylase/hydrolase from Nematostella vectensis (Starlet sea anemone).